Reading from the N-terminus, the 538-residue chain is Phosphoenolpyruvate carboxykinase (ATP) (538 aa).

Substrate is bound by residues Arg64, Tyr205, and Lys211. Residues Lys211, His230, and Gly246 to Thr254 contribute to the ATP site. Mn(2+)-binding residues include Lys211 and His230. Asp267 provides a ligand contact to Mn(2+). ATP is bound by residues Glu295, Arg331, Arg447–Ile448, and Thr453. Arg331 provides a ligand contact to substrate.

The protein belongs to the phosphoenolpyruvate carboxykinase (ATP) family. In terms of assembly, monomer. Mn(2+) is required as a cofactor.

Its subcellular location is the cytoplasm. It carries out the reaction oxaloacetate + ATP = phosphoenolpyruvate + ADP + CO2. It functions in the pathway carbohydrate biosynthesis; gluconeogenesis. Involved in the gluconeogenesis. Catalyzes the conversion of oxaloacetate (OAA) to phosphoenolpyruvate (PEP) through direct phosphoryl transfer between the nucleoside triphosphate and OAA. The sequence is that of Phosphoenolpyruvate carboxykinase (ATP) from Haemophilus influenzae (strain 86-028NP).